A 97-amino-acid chain; its full sequence is Large ribosomal subunit protein bL28 (97 aa).

Belongs to the bacterial ribosomal protein bL28 family.

The polypeptide is Large ribosomal subunit protein bL28 (Brucella abortus (strain S19)).